The following is a 1125-amino-acid chain: Phytochrome A (1125 aa).

2 stretches are compositionally biased toward low complexity: residues 1–14 (MSSS…SNSA) and 39–48 (SGSSFDYSSS). 2 disordered regions span residues 1–22 (MSSS…SARI) and 38–64 (ESGS…PRSD). Residues 218–401 (SMERLCDTMV…VFAIHVNKEL (184 aa)) enclose the GAF domain. A phytochromobilin-binding site is contributed by Cys-323. 2 PAS domains span residues 617–687 (VTSE…LQGK) and 750–821 (DYKA…VNLG). Residues 901 to 1117 (YLKKQIWNPL…SFIISVELAG (217 aa)) form the Histidine kinase domain.

This sequence belongs to the phytochrome family. In terms of assembly, homodimer. Contains one covalently linked phytochromobilin chromophore.

In terms of biological role, regulatory photoreceptor which exists in two forms that are reversibly interconvertible by light: the Pr form that absorbs maximally in the red region of the spectrum and the Pfr form that absorbs maximally in the far-red region. Photoconversion of Pr to Pfr induces an array of morphogenic responses, whereas reconversion of Pfr to Pr cancels the induction of those responses. Pfr controls the expression of a number of nuclear genes including those encoding the small subunit of ribulose-bisphosphate carboxylase, chlorophyll A/B binding protein, protochlorophyllide reductase, rRNA, etc. It also controls the expression of its own gene(s) in a negative feedback fashion. This chain is Phytochrome A (PHYA), found in Populus tremuloides (Quaking aspen).